The primary structure comprises 62 residues: Photosystem II reaction center protein Z (62 aa).

2 helical membrane-spanning segments follow: residues 8-28 and 41-61; these read LVVA…ITLS and VTAS…NSFV.

Belongs to the PsbZ family. PSII is composed of 1 copy each of membrane proteins PsbA, PsbB, PsbC, PsbD, PsbE, PsbF, PsbH, PsbI, PsbJ, PsbK, PsbL, PsbM, PsbT, PsbX, PsbY, PsbZ, Psb30/Ycf12, at least 3 peripheral proteins of the oxygen-evolving complex and a large number of cofactors. It forms dimeric complexes.

The protein localises to the plastid. It localises to the chloroplast thylakoid membrane. Functionally, may control the interaction of photosystem II (PSII) cores with the light-harvesting antenna, regulates electron flow through the 2 photosystem reaction centers. PSII is a light-driven water plastoquinone oxidoreductase, using light energy to abstract electrons from H(2)O, generating a proton gradient subsequently used for ATP formation. The chain is Photosystem II reaction center protein Z from Cyanidioschyzon merolae (strain NIES-3377 / 10D) (Unicellular red alga).